The sequence spans 507 residues: Extracellular elastase (507 aa).

Residues 1 to 28 (MKNFSKFALTSIAALTVASPLVNTEVDA) form the signal peptide. A propeptide spanning residues 29 to 207 (KDKVSATQNI…VVDKLNMIKE (179 aa)) is cleaved from the precursor. A Ca(2+)-binding site is contributed by aspartate 347. Histidine 351 contributes to the Zn(2+) binding site. Residue glutamate 352 is part of the active site. Residues histidine 355 and glutamate 375 each coordinate Zn(2+). Residues aspartate 386, glutamate 388, aspartate 389, leucine 391, glutamate 394, tyrosine 397, threonine 398, valine 401, and aspartate 404 each coordinate Ca(2+). Histidine 435 (proton donor) is an active-site residue.

This sequence belongs to the peptidase M4 family. Ca(2+) is required as a cofactor. Requires Zn(2+) as cofactor.

It is found in the secreted. Its function is as follows. Protease that has a low substrate specificity. Glucagon is preferentially cleaved between aromatic (Phe) and hydrophobic (Val) amino acids. Hydrolyzes casein and elastin. The sequence is that of Extracellular elastase (sepA) from Staphylococcus epidermidis.